Here is a 211-residue protein sequence, read N- to C-terminus: uncharacterized protein (211 aa).

Disordered regions lie at residues 1 to 73 and 96 to 123; these read MLRR…SKLK and TNAA…ASLS. Composition is skewed to polar residues over residues 26–35 and 53–62; these read SKSSLISLTS and APSQFLSPTN. Positions 63 to 73 are enriched in low complexity; that stretch reads KRSTSSQSKLK. A Phosphoserine modification is found at Ser-182. Phosphothreonine is present on Thr-184. Ser-186 is modified (phosphoserine).

This is an uncharacterized protein from Saccharomyces cerevisiae (strain ATCC 204508 / S288c) (Baker's yeast).